The following is a 305-amino-acid chain: Oxygen-dependent coproporphyrinogen-III oxidase (305 aa).

Ser-99 contacts substrate. A divalent metal cation contacts are provided by His-103 and His-113. The active-site Proton donor is His-113. 115–117 (NVR) provides a ligand contact to substrate. A divalent metal cation-binding residues include His-152 and His-182. The tract at residues 247–282 (YVEFNLVLDRGTLFGLQTGGRTESILMSMPPLARWE) is important for dimerization. 265-267 (GGR) lines the substrate pocket.

This sequence belongs to the aerobic coproporphyrinogen-III oxidase family. As to quaternary structure, homodimer. Requires a divalent metal cation as cofactor.

It is found in the cytoplasm. It catalyses the reaction coproporphyrinogen III + O2 + 2 H(+) = protoporphyrinogen IX + 2 CO2 + 2 H2O. The protein operates within porphyrin-containing compound metabolism; protoporphyrin-IX biosynthesis; protoporphyrinogen-IX from coproporphyrinogen-III (O2 route): step 1/1. In terms of biological role, involved in the heme biosynthesis. Catalyzes the aerobic oxidative decarboxylation of propionate groups of rings A and B of coproporphyrinogen-III to yield the vinyl groups in protoporphyrinogen-IX. This chain is Oxygen-dependent coproporphyrinogen-III oxidase, found in Vibrio cholerae serotype O1 (strain M66-2).